A 466-amino-acid polypeptide reads, in one-letter code: Ribosome biogenesis protein YTM1 (466 aa).

A ubiquitin-like (UBL) domain region spans residues 8-95; that stretch reads IKINFFTNEE…EASLNLEYTR (88 aa). Residues 105-466 are sufficient for interaction with ERB1 and association with 66S pre-ribosomes; the sequence is SFNNDDWISS…QINKGSDITK (362 aa). WD repeat units lie at residues 120–159, 161–199, 214–253, 291–331, 333–372, 381–421, and 431–466; these read PLSASVKASNMSISQPKILSGSYDGIVRTYNMSGKVEKQY, GHSGPIRSVKWISPTRIVSSGNDRQVRLWKTSIDSNIED, GHKAPVVSLAVEYQNNRILSAGYDKAIGFWSTNYREMTTI, GHSQ…CVDT, TTGYSLLSLLQLPSLNLLVCGSSARHINLFDPRVSSTTTE, GHTN…SLYT, and KGQDKVFSVIWDNDIGIISGGQDKKIQINKGSDITK.

This sequence belongs to the WD repeat WDR12/YTM1 family. Component of the NOP7 complex, composed of ERB1, NOP7 and YTM1. The complex is held together by ERB1, which interacts with NOP7 via its N-terminal domain and with YTM1 via a high-affinity interaction between the seven-bladed beta-propeller domains of the 2 proteins. The NOP7 complex associates with the 66S pre-ribosome. Interacts (via UBL domain) with MDN1 (via VWFA/MIDAS domain).

The protein localises to the nucleus. It is found in the nucleolus. Its subcellular location is the nucleoplasm. Functionally, component of the NOP7 complex, which is required for maturation of the 25S and 5.8S ribosomal RNAs and formation of the 60S ribosome. The polypeptide is Ribosome biogenesis protein YTM1 (Debaryomyces hansenii (strain ATCC 36239 / CBS 767 / BCRC 21394 / JCM 1990 / NBRC 0083 / IGC 2968) (Yeast)).